The chain runs to 443 residues: Tubulin beta chain (443 aa).

Residues glutamine 11, glutamate 69, serine 138, glycine 142, threonine 143, glycine 144, asparagine 204, and asparagine 226 each coordinate GTP. Glutamate 69 contributes to the Mg(2+) binding site. The tract at residues 424 to 443 (QYQDASAEEEGEFEGEEEEA) is disordered. Positions 429–443 (SAEEEGEFEGEEEEA) are enriched in acidic residues.

This sequence belongs to the tubulin family. Dimer of alpha and beta chains. A typical microtubule is a hollow water-filled tube with an outer diameter of 25 nm and an inner diameter of 15 nM. Alpha-beta heterodimers associate head-to-tail to form protofilaments running lengthwise along the microtubule wall with the beta-tubulin subunit facing the microtubule plus end conferring a structural polarity. Microtubules usually have 13 protofilaments but different protofilament numbers can be found in some organisms and specialized cells. Mg(2+) is required as a cofactor.

It is found in the cytoplasm. It localises to the cytoskeleton. Tubulin is the major constituent of microtubules, a cylinder consisting of laterally associated linear protofilaments composed of alpha- and beta-tubulin heterodimers. Microtubules grow by the addition of GTP-tubulin dimers to the microtubule end, where a stabilizing cap forms. Below the cap, tubulin dimers are in GDP-bound state, owing to GTPase activity of alpha-tubulin. This is Tubulin beta chain (TUBB) from Chlamydomonas incerta.